The primary structure comprises 303 residues: Ribosomal protein L11 methyltransferase (303 aa).

S-adenosyl-L-methionine contacts are provided by T144, G165, D187, and N235.

It belongs to the methyltransferase superfamily. PrmA family.

It is found in the cytoplasm. It carries out the reaction L-lysyl-[protein] + 3 S-adenosyl-L-methionine = N(6),N(6),N(6)-trimethyl-L-lysyl-[protein] + 3 S-adenosyl-L-homocysteine + 3 H(+). In terms of biological role, methylates ribosomal protein L11. In Prochlorococcus marinus (strain MIT 9301), this protein is Ribosomal protein L11 methyltransferase.